The sequence spans 232 residues: Peptidoglycan-recognition protein LB (232 aa).

Residues 1 to 15 form the signal peptide; the sequence is MTALGLVLLSMMGYS. Positions 53–179 constitute an N-acetylmuramoyl-L-alanine amidase domain; the sequence is APYVIIHHSY…RQVRDTECPG (127 aa). H59 provides a ligand contact to Zn(2+). Residues C67 and C73 are joined by a disulfide bond. 2 residues coordinate Zn(2+): H169 and C177. A glycan (N-linked (GlcNAc...) asparagine) is linked at N196. Residues 213–232 form a disordered region; that stretch reads HPQAAAPQKPHQSPPAAPKV.

The protein belongs to the N-acetylmuramoyl-L-alanine amidase 2 family. As to quaternary structure, monomer. Requires Zn(2+) as cofactor. As to expression, widely expressed.

The protein localises to the secreted. The enzyme catalyses Hydrolyzes the link between N-acetylmuramoyl residues and L-amino acid residues in certain cell-wall glycopeptides.. N-acetylmuramyl-L-alanine amidase involved in innate immunity by degrading bacterial peptidoglycans (PGN). Probably plays a scavenger role by digesting biologically active PGN into biologically inactive fragments. Has no direct bacteriolytic activity. This chain is Peptidoglycan-recognition protein LB (PGRP-LB), found in Drosophila melanogaster (Fruit fly).